The following is a 62-amino-acid chain: uncharacterized protein (62 aa).

Its subcellular location is the plastid. The protein resides in the chloroplast. This is an uncharacterized protein from Porphyra purpurea (Red seaweed).